A 220-amino-acid polypeptide reads, in one-letter code: Ribose-5-phosphate isomerase A (220 aa).

Residues 28–31 (TGST), 81–84 (DGAD), and 94–97 (KGGG) each bind substrate. Glutamate 103 serves as the catalytic Proton acceptor. Lysine 121 serves as a coordination point for substrate.

The protein belongs to the ribose 5-phosphate isomerase family. As to quaternary structure, homodimer.

It catalyses the reaction aldehydo-D-ribose 5-phosphate = D-ribulose 5-phosphate. The protein operates within carbohydrate degradation; pentose phosphate pathway; D-ribose 5-phosphate from D-ribulose 5-phosphate (non-oxidative stage): step 1/1. Its function is as follows. Catalyzes the reversible conversion of ribose-5-phosphate to ribulose 5-phosphate. The sequence is that of Ribose-5-phosphate isomerase A from Coxiella burnetii (strain CbuK_Q154) (Coxiella burnetii (strain Q154)).